The sequence spans 553 residues: MDAEKRLFLKALKEKFEEDPREKYTKFYVFGGWRQSARKREFVEAAQKLIEKRGGIPFYNPDIGVPLGQRKLMPYKVSNTDAIVEGDDLHFMNNAAMQQFWDDIRRTVIVGMDTAHAVLEKRLGVEVTPETINEYMETINHALPGGAVVQEHMVEVHPALVWDCYAKIFTGDDELADEIDKRFLIDINKLFPEEQAEQIKKAIGKRTYQVSRVPTLVGRVCDGGTIARWSAMQIGMSFITAYKLCAGEAAIADFSYAAKHADVIQMASFLPARRARGPNEPGGIFFGVLADIVQTSRVSDDPVEQSLEVVAAGAMLYDQIWLGGYMSGGVGFTQYATATYTDDILDDFSYYGYDYITKKYGGCNSVKPTMDVVEDIATEVTLYGLEQYDTFPALLEDHFGGSQRAGVTAAAAGITTALATGNSNAGVNGWYLSQILHKEYHSRLGFYGYDLQDQCGAANSLSFRNDEGSPLELRGPNYPNYAMNVGHQGEYAGITQAAHSARGDAFALNPLIKVAFADPSLVFDFTHPRKEFARGALREFEPAGERDPIIPAH.

Gln-150 provides a ligand contact to coenzyme F430. Residues Arg-228, 259–260 (KH), and Arg-273 contribute to the coenzyme B site. Arg-274 is modified (5-methylarginine). 2 residues coordinate coenzyme M: Tyr-335 and Tyr-447.

Belongs to the methyl-coenzyme M reductase alpha subunit family. In terms of assembly, MCR is a hexamer of two alpha, two beta, and two gamma chains, forming a dimer of heterotrimers. Requires coenzyme F430 as cofactor. In terms of processing, is methylated on C5 of Arg-274 by the methyltransferase MJ0841. This post-translational methylation, despite being not essential in vivo, plays a role for the stability and structural integrity of MCR.

The protein localises to the cytoplasm. The catalysed reaction is coenzyme B + methyl-coenzyme M = methane + coenzyme M-coenzyme B heterodisulfide. It participates in one-carbon metabolism; methyl-coenzyme M reduction; methane from methyl-coenzyme M: step 1/1. Component of the methyl-coenzyme M reductase (MCR) I that catalyzes the reductive cleavage of methyl-coenzyme M (CoM-S-CH3 or 2-(methylthio)ethanesulfonate) using coenzyme B (CoB or 7-mercaptoheptanoylthreonine phosphate) as reductant which results in the production of methane and the mixed heterodisulfide of CoB and CoM (CoM-S-S-CoB). This is the final step in methanogenesis. The polypeptide is Methyl-coenzyme M reductase I subunit alpha (mcrA) (Methanocaldococcus jannaschii (strain ATCC 43067 / DSM 2661 / JAL-1 / JCM 10045 / NBRC 100440) (Methanococcus jannaschii)).